We begin with the raw amino-acid sequence, 690 residues long: BURP domain-containing protein 14 (690 aa).

The signal sequence occupies residues 1–26; it reads MAPPRHARLVAATIAVLLCHLPRSAA. The tract at residues 134–163 is disordered; that stretch reads GSSWSKSSSDGDGAAAAAAPAGGGGGGGGG. Positions 135-153 are enriched in low complexity; sequence SSWSKSSSDGDGAAAAAAP. The segment covering 154–163 has biased composition (gly residues); it reads AGGGGGGGGG. An N-linked (GlcNAc...) asparagine glycan is attached at N178. Positions 201 to 211 are enriched in gly residues; sequence SNGGGGGGGGV. Residues 201–232 are disordered; that stretch reads SNGGGGGGGGVDSFRRYGKGSQGRNDSFTSYE. N225, N317, N379, N432, N450, and N601 each carry an N-linked (GlcNAc...) asparagine glycan. In terms of domain architecture, BURP spans 477-689; it reads FFRERDLVAG…FQGDMTWTVA (213 aa).

In terms of tissue distribution, expressed in panicles.

This chain is BURP domain-containing protein 14 (BURP14), found in Oryza sativa subsp. japonica (Rice).